Consider the following 638-residue polypeptide: 1-deoxy-D-xylulose-5-phosphate synthase (638 aa).

Residues His-75 and 116–118 (AHS) contribute to the thiamine diphosphate site. Asp-147 serves as a coordination point for Mg(2+). Residues 148 to 149 (GA), Asn-177, Tyr-288, and Glu-370 contribute to the thiamine diphosphate site. Asn-177 serves as a coordination point for Mg(2+).

It belongs to the transketolase family. DXPS subfamily. In terms of assembly, homodimer. Mg(2+) is required as a cofactor. It depends on thiamine diphosphate as a cofactor.

The enzyme catalyses D-glyceraldehyde 3-phosphate + pyruvate + H(+) = 1-deoxy-D-xylulose 5-phosphate + CO2. Its pathway is metabolic intermediate biosynthesis; 1-deoxy-D-xylulose 5-phosphate biosynthesis; 1-deoxy-D-xylulose 5-phosphate from D-glyceraldehyde 3-phosphate and pyruvate: step 1/1. Functionally, catalyzes the acyloin condensation reaction between C atoms 2 and 3 of pyruvate and glyceraldehyde 3-phosphate to yield 1-deoxy-D-xylulose-5-phosphate (DXP). The protein is 1-deoxy-D-xylulose-5-phosphate synthase of Cupriavidus pinatubonensis (strain JMP 134 / LMG 1197) (Cupriavidus necator (strain JMP 134)).